A 316-amino-acid chain; its full sequence is Probable porphobilinogen deaminase (316 aa).

C234 is modified (S-(dipyrrolylmethanemethyl)cysteine).

Belongs to the HMBS family. The cofactor is dipyrromethane.

It carries out the reaction 4 porphobilinogen + H2O = hydroxymethylbilane + 4 NH4(+). It functions in the pathway porphyrin-containing compound metabolism; protoporphyrin-IX biosynthesis; coproporphyrinogen-III from 5-aminolevulinate: step 2/4. Functionally, tetrapolymerization of the monopyrrole PBG into the hydroxymethylbilane pre-uroporphyrinogen in several discrete steps. The chain is Probable porphobilinogen deaminase from Methanosarcina barkeri (strain Fusaro / DSM 804).